Consider the following 372-residue polypeptide: Isoliquiritigenin 2'-O-methyltransferase (372 aa).

Residues glycine 217, aspartate 240, aspartate 260, methionine 261, and lysine 274 each contribute to the S-adenosyl-L-methionine site. Histidine 278 acts as the Proton acceptor in catalysis.

It belongs to the class I-like SAM-binding methyltransferase superfamily. Cation-independent O-methyltransferase family. COMT subfamily. As to quaternary structure, monomer. Homodimer. In terms of tissue distribution, roots (at protein level). Expressed mainly in roots, and to a lesser extent in root nodules. In the roots, expression is not detected in the root tip or the cells immediately behind the tip, but is detected in tissues starting 1.5-2.0 mm distal to the root tip. Detected in the epidermal and cortical cells of 2 day old roots, with lower levels in vascular tissue.

The catalysed reaction is isoliquiritigenin + S-adenosyl-L-methionine = 2'-O-methylisoliquiritigenin + S-adenosyl-L-homocysteine + H(+). It catalyses the reaction licodione + S-adenosyl-L-methionine = 2'-O-methyllicodione + S-adenosyl-L-homocysteine + H(+). Inhibited by 1 mM Co(2+), Cu(2+), Zn(2+) or Fe(2+). Non-competitively inhibited by S-adenosyl-L-homocysteine. Competitively inhibited by 2'-O-methylisoliquiritigenin. Its function is as follows. Methylates the 2'-hydroxyl of isoliquiritigenin and licodione. Does not methylate narigenin chalcone, caffeic acid or daidzein. Involved in the root nodulation initiation by promoting the biosynthesis of nod-inducing molecules. This is Isoliquiritigenin 2'-O-methyltransferase from Medicago sativa (Alfalfa).